Reading from the N-terminus, the 204-residue chain is Recombination protein RecR (204 aa).

A C4-type zinc finger spans residues 59 to 74; it reads CTRCNTFTELEICGTC. In terms of domain architecture, Toprim spans 82 to 181; sequence TLLCVVETPA…KVSRLARGVP (100 aa).

It belongs to the RecR family.

May play a role in DNA repair. It seems to be involved in an RecBC-independent recombinational process of DNA repair. It may act with RecF and RecO. The chain is Recombination protein RecR from Cupriavidus metallidurans (strain ATCC 43123 / DSM 2839 / NBRC 102507 / CH34) (Ralstonia metallidurans).